Reading from the N-terminus, the 177-residue chain is Large ribosomal subunit protein uL6 (177 aa).

The protein belongs to the universal ribosomal protein uL6 family. As to quaternary structure, part of the 50S ribosomal subunit.

Functionally, this protein binds to the 23S rRNA, and is important in its secondary structure. It is located near the subunit interface in the base of the L7/L12 stalk, and near the tRNA binding site of the peptidyltransferase center. The sequence is that of Large ribosomal subunit protein uL6 from Nitrobacter winogradskyi (strain ATCC 25391 / DSM 10237 / CIP 104748 / NCIMB 11846 / Nb-255).